A 359-amino-acid polypeptide reads, in one-letter code: Probable dual-specificity RNA methyltransferase RlmN (359 aa).

The active-site Proton acceptor is the Glu91. Residues 97–335 enclose the Radical SAM core domain; it reads QHYGHSVCVT…CVVRQEHGTD (239 aa). Cys104 and Cys340 are disulfide-bonded. [4Fe-4S] cluster-binding residues include Cys111, Cys115, and Cys118. S-adenosyl-L-methionine-binding positions include 163-164, Ser195, 218-220, and Asn296; these read GE and SLH. Cys340 serves as the catalytic S-methylcysteine intermediate.

The protein belongs to the radical SAM superfamily. RlmN family. [4Fe-4S] cluster is required as a cofactor.

Its subcellular location is the cytoplasm. The enzyme catalyses adenosine(2503) in 23S rRNA + 2 reduced [2Fe-2S]-[ferredoxin] + 2 S-adenosyl-L-methionine = 2-methyladenosine(2503) in 23S rRNA + 5'-deoxyadenosine + L-methionine + 2 oxidized [2Fe-2S]-[ferredoxin] + S-adenosyl-L-homocysteine. The catalysed reaction is adenosine(37) in tRNA + 2 reduced [2Fe-2S]-[ferredoxin] + 2 S-adenosyl-L-methionine = 2-methyladenosine(37) in tRNA + 5'-deoxyadenosine + L-methionine + 2 oxidized [2Fe-2S]-[ferredoxin] + S-adenosyl-L-homocysteine. Its function is as follows. Specifically methylates position 2 of adenine 2503 in 23S rRNA and position 2 of adenine 37 in tRNAs. This chain is Probable dual-specificity RNA methyltransferase RlmN, found in Streptococcus pyogenes serotype M12 (strain MGAS2096).